Here is a 590-residue protein sequence, read N- to C-terminus: Pentatricopeptide repeat-containing protein At1g63070, mitochondrial (590 aa).

Residues 1 to 34 constitute a mitochondrion transit peptide; that stretch reads MMRSVAVIGKKCLHRHTVLLKGNPRTTLCWERSF. 14 PPR repeats span residues 74 to 108, 109 to 143, 144 to 178, 179 to 213, 214 to 248, 249 to 283, 284 to 318, 319 to 353, 355 to 389, 390 to 424, 425 to 459, 460 to 494, 495 to 529, and 530 to 564; these read SIVE…GISH, NLYT…GYGP, SIVT…GYQP, DTVT…GCQP, DLVT…KIEA, DVVI…GIKP, DVFT…NINP, DLVF…KHCF, DVVA…GLVG, NTVT…GVHP, DIMT…DMKL, DIVT…GVKP, NVVT…GPLP, and NSGT…GFAG.

It belongs to the PPR family. P subfamily.

It is found in the mitochondrion. The sequence is that of Pentatricopeptide repeat-containing protein At1g63070, mitochondrial from Arabidopsis thaliana (Mouse-ear cress).